A 301-amino-acid polypeptide reads, in one-letter code: Ribosomal protein L11 methyltransferase (301 aa).

Residues Thr-147, Gly-168, Asp-190, and Asn-237 each coordinate S-adenosyl-L-methionine.

Belongs to the methyltransferase superfamily. PrmA family.

It is found in the cytoplasm. The catalysed reaction is L-lysyl-[protein] + 3 S-adenosyl-L-methionine = N(6),N(6),N(6)-trimethyl-L-lysyl-[protein] + 3 S-adenosyl-L-homocysteine + 3 H(+). Its function is as follows. Methylates ribosomal protein L11. This is Ribosomal protein L11 methyltransferase from Synechococcus sp. (strain RCC307).